A 263-amino-acid chain; its full sequence is Phosphatidylglycerol--prolipoprotein diacylglyceryl transferase (263 aa).

A run of 4 helical transmembrane segments spans residues 6 to 26 (VIFS…VLGI), 50 to 70 (LLTA…VLIY), 85 to 105 (TWEG…AVII), and 112 to 132 (IPIF…LFLG). Arg-133 is a binding site for a 1,2-diacyl-sn-glycero-3-phospho-(1'-sn-glycerol). The next 3 helical transmembrane spans lie at 169 to 189 (LYEA…LFFL), 197 to 217 (GALT…VEFF), and 233 to 253 (MGQL…LGAL).

The protein belongs to the Lgt family.

The protein resides in the cell membrane. The enzyme catalyses L-cysteinyl-[prolipoprotein] + a 1,2-diacyl-sn-glycero-3-phospho-(1'-sn-glycerol) = an S-1,2-diacyl-sn-glyceryl-L-cysteinyl-[prolipoprotein] + sn-glycerol 1-phosphate + H(+). The protein operates within protein modification; lipoprotein biosynthesis (diacylglyceryl transfer). Catalyzes the transfer of the diacylglyceryl group from phosphatidylglycerol to the sulfhydryl group of the N-terminal cysteine of a prolipoprotein, the first step in the formation of mature lipoproteins. The sequence is that of Phosphatidylglycerol--prolipoprotein diacylglyceryl transferase from Wolbachia sp. subsp. Drosophila simulans (strain wRi).